Reading from the N-terminus, the 711-residue chain is Polyribonucleotide nucleotidyltransferase (711 aa).

Mg(2+) is bound by residues Asp486 and Asp492. A KH domain is found at 553 to 612 (PRIHTIKINPDKIKDVIGKGGSVIRALTEETGTTIEIEDDGTVKIAATDGEKAKHAIRRI). Residues 622 to 690 (GRVYTGKVTR…RQGRIRLSIK (69 aa)) form the S1 motif domain. The segment at 690–711 (KEATEQSQPAAAPEAPAAEQGE) is disordered. Low complexity predominate over residues 694-711 (EQSQPAAAPEAPAAEQGE).

Belongs to the polyribonucleotide nucleotidyltransferase family. As to quaternary structure, component of the RNA degradosome, which is a multiprotein complex involved in RNA processing and mRNA degradation. Mg(2+) serves as cofactor.

Its subcellular location is the cytoplasm. It carries out the reaction RNA(n+1) + phosphate = RNA(n) + a ribonucleoside 5'-diphosphate. Functionally, involved in mRNA degradation. Catalyzes the phosphorolysis of single-stranded polyribonucleotides processively in the 3'- to 5'-direction. The chain is Polyribonucleotide nucleotidyltransferase from Shigella dysenteriae serotype 1 (strain Sd197).